The sequence spans 29 residues: Brevinin-2Rc (29 aa).

An intrachain disulfide couples cysteine 23 to cysteine 29.

As to expression, expressed by the skin glands.

The protein localises to the secreted. Antimicrobial peptide. The protein is Brevinin-2Rc of Pelophylax ridibundus (Marsh frog).